Consider the following 97-residue polypeptide: Large ribosomal subunit protein eL37 (97 aa).

Lys-10 is modified (N6-acetyllysine). Residues Cys-19, Cys-22, Cys-34, and Cys-37 each coordinate Zn(2+). Residues 19–37 (CRRCGSKAYHLQKSTCGKC) form a C4-type zinc finger. Ser-96 and Ser-97 each carry phosphoserine.

It belongs to the eukaryotic ribosomal protein eL37 family. As to quaternary structure, component of the large ribosomal subunit.

The protein localises to the cytoplasm. Its function is as follows. Component of the large ribosomal subunit. The ribosome is a large ribonucleoprotein complex responsible for the synthesis of proteins in the cell. This is Large ribosomal subunit protein eL37 (RPL37) from Bos taurus (Bovine).